Reading from the N-terminus, the 496-residue chain is Apolipoprotein N-acyltransferase (496 aa).

6 helical membrane-spanning segments follow: residues 6–26, 50–70, 77–97, 114–134, 148–168, and 183–203; these read IICF…FFIP, FGYL…SIGV, FWWA…FFIS, LIFC…CTGL, ILIQ…VIYI, and LKIL…YGAM. The 245-residue stretch at 220-464 folds into the CN hydrolase domain; that stretch reads VQPSIPQTAK…QGLIPQKLTT (245 aa). The active-site Proton acceptor is E259. The active site involves K322. C372 functions as the Nucleophile in the catalytic mechanism. Residues 474-494 traverse the membrane as a helical segment; it reads FAMLLPIVFILLIHYLLSLIF.

It belongs to the CN hydrolase family. Apolipoprotein N-acyltransferase subfamily.

The protein localises to the cell inner membrane. The enzyme catalyses N-terminal S-1,2-diacyl-sn-glyceryl-L-cysteinyl-[lipoprotein] + a glycerophospholipid = N-acyl-S-1,2-diacyl-sn-glyceryl-L-cysteinyl-[lipoprotein] + a 2-acyl-sn-glycero-3-phospholipid + H(+). Its pathway is protein modification; lipoprotein biosynthesis (N-acyl transfer). Catalyzes the phospholipid dependent N-acylation of the N-terminal cysteine of apolipoprotein, the last step in lipoprotein maturation. This Rickettsia typhi (strain ATCC VR-144 / Wilmington) protein is Apolipoprotein N-acyltransferase.